Consider the following 82-residue polypeptide: Small ribosomal subunit protein uS17 (82 aa).

The protein belongs to the universal ribosomal protein uS17 family. Part of the 30S ribosomal subunit.

Its function is as follows. One of the primary rRNA binding proteins, it binds specifically to the 5'-end of 16S ribosomal RNA. The chain is Small ribosomal subunit protein uS17 from Phenylobacterium zucineum (strain HLK1).